A 261-amino-acid polypeptide reads, in one-letter code: Small ribosomal subunit protein eS1 (261 aa).

Residues 1–18 are compositionally biased toward basic residues; sequence MAVGKNKRISKGKKGGKK. Residues 1–21 are disordered; it reads MAVGKNKRISKGKKGGKKKAT.

It belongs to the eukaryotic ribosomal protein eS1 family. As to quaternary structure, component of the small ribosomal subunit. Mature ribosomes consist of a small (40S) and a large (60S) subunit. The 40S subunit contains about 33 different proteins and 1 molecule of RNA (18S). The 60S subunit contains about 49 different proteins and 3 molecules of RNA (25S, 5.8S and 5S).

The protein resides in the cytoplasm. This is Small ribosomal subunit protein eS1 (cyc07) from Daucus carota (Wild carrot).